A 337-amino-acid polypeptide reads, in one-letter code: Anthranilate phosphoribosyltransferase (337 aa).

5-phospho-alpha-D-ribose 1-diphosphate contacts are provided by residues Gly-81, 84–85, Ser-89, 91–94, 109–117, and Ala-121; these read GD, NVST, and KHGNRALSS. An anthranilate-binding site is contributed by Gly-81. Mg(2+) is bound at residue Ser-93. Anthranilate is bound at residue Asn-112. An anthranilate-binding site is contributed by Arg-167. Mg(2+)-binding residues include Asp-226 and Glu-227.

This sequence belongs to the anthranilate phosphoribosyltransferase family. In terms of assembly, homodimer. Requires Mg(2+) as cofactor.

The enzyme catalyses N-(5-phospho-beta-D-ribosyl)anthranilate + diphosphate = 5-phospho-alpha-D-ribose 1-diphosphate + anthranilate. It functions in the pathway amino-acid biosynthesis; L-tryptophan biosynthesis; L-tryptophan from chorismate: step 2/5. Functionally, catalyzes the transfer of the phosphoribosyl group of 5-phosphorylribose-1-pyrophosphate (PRPP) to anthranilate to yield N-(5'-phosphoribosyl)-anthranilate (PRA). In Bradyrhizobium diazoefficiens (strain JCM 10833 / BCRC 13528 / IAM 13628 / NBRC 14792 / USDA 110), this protein is Anthranilate phosphoribosyltransferase.